The following is a 1122-amino-acid chain: Transcription-repair-coupling factor (1122 aa).

The 166-residue stretch at 593 to 758 (DLRNGMLMDR…MTGLKELSII (166 aa)) folds into the Helicase ATP-binding domain. Position 606–613 (606–613 (GDVGFGKT)) interacts with ATP. A DEEQ box motif is present at residues 711 to 714 (DEEQ). The Helicase C-terminal domain maps to 779 to 933 (IIRDALLREH…GFTIASRDMD (155 aa)).

The protein in the N-terminal section; belongs to the UvrB family. This sequence in the C-terminal section; belongs to the helicase family. RecG subfamily.

The protein localises to the cytoplasm. Couples transcription and DNA repair by recognizing RNA polymerase (RNAP) stalled at DNA lesions. Mediates ATP-dependent release of RNAP and its truncated transcript from the DNA, and recruitment of nucleotide excision repair machinery to the damaged site. In Rickettsia conorii (strain ATCC VR-613 / Malish 7), this protein is Transcription-repair-coupling factor.